Reading from the N-terminus, the 398-residue chain is Acetate kinase (398 aa).

Position 7 (Asn-7) interacts with Mg(2+). Lys-14 serves as a coordination point for ATP. Arg-96 serves as a coordination point for substrate. Asp-153 serves as the catalytic Proton donor/acceptor. ATP contacts are provided by residues 210 to 214 (HLGNG), 284 to 286 (DLR), and 332 to 336 (GIGEH). A Mg(2+)-binding site is contributed by Glu-385.

It belongs to the acetokinase family. In terms of assembly, homodimer. Mg(2+) serves as cofactor. It depends on Mn(2+) as a cofactor.

It localises to the cytoplasm. The catalysed reaction is acetate + ATP = acetyl phosphate + ADP. Its pathway is metabolic intermediate biosynthesis; acetyl-CoA biosynthesis; acetyl-CoA from acetate: step 1/2. Its function is as follows. Catalyzes the formation of acetyl phosphate from acetate and ATP. Can also catalyze the reverse reaction. The polypeptide is Acetate kinase (Acaryochloris marina (strain MBIC 11017)).